Reading from the N-terminus, the 307-residue chain is Putative lipid kinase SERP0390 (307 aa).

In terms of domain architecture, DAGKc spans 3 to 139; it reads QPYNHGVLFY…YDVLKVNDLY (137 aa). ATP contacts are provided by residues serine 44, 74 to 80, and threonine 101; that span reads GDGTLNE. 3 residues coordinate Mg(2+): serine 220, aspartate 223, and arginine 225. Residue glutamate 281 is the Proton acceptor of the active site.

It belongs to the diacylglycerol/lipid kinase family. Mg(2+) is required as a cofactor.

In terms of biological role, may catalyze the ATP-dependent phosphorylation of lipids other than diacylglycerol (DAG). This Staphylococcus epidermidis (strain ATCC 35984 / DSM 28319 / BCRC 17069 / CCUG 31568 / BM 3577 / RP62A) protein is Putative lipid kinase SERP0390.